The sequence spans 181 residues: Crossover junction endodeoxyribonuclease RuvC (181 aa).

Catalysis depends on residues D7, E67, and D139. Mg(2+)-binding residues include D7, E67, and D139.

Belongs to the RuvC family. As to quaternary structure, homodimer which binds Holliday junction (HJ) DNA. The HJ becomes 2-fold symmetrical on binding to RuvC with unstacked arms; it has a different conformation from HJ DNA in complex with RuvA. In the full resolvosome a probable DNA-RuvA(4)-RuvB(12)-RuvC(2) complex forms which resolves the HJ. Requires Mg(2+) as cofactor.

It localises to the cytoplasm. It carries out the reaction Endonucleolytic cleavage at a junction such as a reciprocal single-stranded crossover between two homologous DNA duplexes (Holliday junction).. Functionally, the RuvA-RuvB-RuvC complex processes Holliday junction (HJ) DNA during genetic recombination and DNA repair. Endonuclease that resolves HJ intermediates. Cleaves cruciform DNA by making single-stranded nicks across the HJ at symmetrical positions within the homologous arms, yielding a 5'-phosphate and a 3'-hydroxyl group; requires a central core of homology in the junction. The consensus cleavage sequence is 5'-(A/T)TT(C/G)-3'. Cleavage occurs on the 3'-side of the TT dinucleotide at the point of strand exchange. HJ branch migration catalyzed by RuvA-RuvB allows RuvC to scan DNA until it finds its consensus sequence, where it cleaves and resolves the cruciform DNA. This is Crossover junction endodeoxyribonuclease RuvC from Ralstonia pickettii (strain 12J).